The chain runs to 341 residues: GTPase Obg (341 aa).

The Obg domain occupies 1-159; the sequence is MKFLDQAKIY…RTIWLRLKLI (159 aa). The OBG-type G domain maps to 160–327; sequence ADAGLVGLPN…TLRQLARIID (168 aa). Residues 166 to 173, 191 to 195, 212 to 215, 279 to 282, and 308 to 310 each bind GTP; these read GLPNAGKS, FTTLH, DIPG, SQVD, and SAV. Residues serine 173 and threonine 193 each coordinate Mg(2+).

This sequence belongs to the TRAFAC class OBG-HflX-like GTPase superfamily. OBG GTPase family. In terms of assembly, monomer. It depends on Mg(2+) as a cofactor.

The protein resides in the cytoplasm. Its function is as follows. An essential GTPase which binds GTP, GDP and possibly (p)ppGpp with moderate affinity, with high nucleotide exchange rates and a fairly low GTP hydrolysis rate. Plays a role in control of the cell cycle, stress response, ribosome biogenesis and in those bacteria that undergo differentiation, in morphogenesis control. This chain is GTPase Obg, found in Brucella abortus biovar 1 (strain 9-941).